The chain runs to 367 residues: 4-hydroxy-3-methylbut-2-en-1-yl diphosphate synthase (flavodoxin) (367 aa).

4 residues coordinate [4Fe-4S] cluster: cysteine 265, cysteine 268, cysteine 300, and glutamate 307.

It belongs to the IspG family. Requires [4Fe-4S] cluster as cofactor.

The enzyme catalyses (2E)-4-hydroxy-3-methylbut-2-enyl diphosphate + oxidized [flavodoxin] + H2O + 2 H(+) = 2-C-methyl-D-erythritol 2,4-cyclic diphosphate + reduced [flavodoxin]. Its pathway is isoprenoid biosynthesis; isopentenyl diphosphate biosynthesis via DXP pathway; isopentenyl diphosphate from 1-deoxy-D-xylulose 5-phosphate: step 5/6. Its function is as follows. Converts 2C-methyl-D-erythritol 2,4-cyclodiphosphate (ME-2,4cPP) into 1-hydroxy-2-methyl-2-(E)-butenyl 4-diphosphate. This Bacillus cereus (strain ATCC 10987 / NRS 248) protein is 4-hydroxy-3-methylbut-2-en-1-yl diphosphate synthase (flavodoxin).